A 38-amino-acid chain; its full sequence is Alpha-2-macroglobulin homolog (38 aa).

Positions Cys27–Gln30 form a cross-link, isoglutamyl cysteine thioester (Cys-Gln).

Belongs to the protease inhibitor I39 (alpha-2-macroglobulin) family. In terms of assembly, homodimer; disulfide-linked. Hemolymph.

It localises to the secreted. Is able to inhibit all four classes of proteinases by a unique 'trapping' mechanism. This protein has a peptide stretch, called the 'bait region' which contains specific cleavage sites for different proteinases. When a proteinase cleaves the bait region, a conformational change is induced in the protein which traps the proteinase. The entrapped enzyme remains active against low molecular weight substrates (activity against high molecular weight substrates is greatly reduced). Following cleavage in the bait region a thioester bond is hydrolyzed and mediates the covalent binding of the protein to the proteinase. This is Alpha-2-macroglobulin homolog from Homarus americanus (American lobster).